The sequence spans 157 residues: Recombination endonuclease VII (157 aa).

Zn(2+) is bound by residues cysteine 23 and cysteine 26. A Ca(2+)-binding site is contributed by aspartate 40. Zn(2+) contacts are provided by cysteine 58 and cysteine 61. Asparagine 62 contributes to the Ca(2+) binding site.

In terms of assembly, homodimer. Requires Ca(2+) as cofactor. The cofactor is Zn(2+).

In terms of biological role, cleaves DNA cruciform and Y-structures as well as heteroduplex loops. Resolves Holliday junctions, recognizes a broad spectrum of DNA substrates ranging from branched DNAs to single base mismatches. This is Recombination endonuclease VII (49) from Enterobacteria phage T4 (Bacteriophage T4).